The sequence spans 543 residues: EH domain-containing protein 2 (543 aa).

Phosphoserine occurs at positions 3 and 44. Positions 55–286 (FDGKPMVLVA…DLFRDIQGLP (232 aa)) constitute a Dynamin-type G domain. The segment at 65 to 72 (GQYSTGKT) is G1 motif. 65–72 (GQYSTGKT) contributes to the ATP binding site. Residues 91–92 (EP) form a G2 motif region. The segment at 153–156 (DTPG) is G3 motif. A G4 motif region spans residues 219 to 222 (NKAD). Lys-220 contacts ATP. Position 243 (Val-243) is a region of interest, G5 motif. Trp-258 is an ATP binding site. The tract at residues 320 to 340 (SVFGKENKKKQLIFKLPVIFA) is mediates membrane-binding. Ser-438, Ser-468, Ser-470, Ser-484, and Ser-493 each carry phosphoserine. The EH domain maps to 449-537 (DKSKYDEIFY…RRLVPPSKRR (89 aa)). The EF-hand domain maps to 481-516 (LPNSVLGRIWKLSDVDRDGMLDDEEFALASHLIEAK). Ca(2+) contacts are provided by Asp-494, Asp-496, Asp-498, Met-500, and Glu-505. The disordered stretch occupies residues 521 to 543 (GLPTNLPRRLVPPSKRRQKGSAE). The span at 534-543 (SKRRQKGSAE) shows a compositional bias: basic residues.

The protein belongs to the TRAFAC class dynamin-like GTPase superfamily. Dynamin/Fzo/YdjA family. EHD subfamily. As to quaternary structure, homodimer and homooligomer. Interacts with EHD1. May also interact with EHD3 and EHD4. Interacts with MYOF. Interacts with EHBP1. Interacts with FER1L5 (via second C2 domain). Interacts with CAV1 in a cholesterol-dependent manner. Interacts (via EH domain) with PACSIN2 (via NPF motifs); this interaction probably stabilizes the caveolae.

The protein localises to the cell membrane. The protein resides in the membrane. Its subcellular location is the caveola. It localises to the endosome membrane. It is found in the cytoplasm. The protein localises to the cytosol. Its activity is regulated as follows. The very low intrinsic ATPase activity is increased upon interaction with liposomes. In terms of biological role, ATP- and membrane-binding protein that controls membrane reorganization/tubulation upon ATP hydrolysis. Plays a role in membrane trafficking between the plasma membrane and endosomes. Important for the internalization of GLUT4. Required for fusion of myoblasts to skeletal muscle myotubes. Required for normal translocation of FER1L5 to the plasma membrane. Regulates the equilibrium between cell surface-associated and cell surface-dissociated caveolae by constraining caveolae at the cell membrane. The chain is EH domain-containing protein 2 from Rattus norvegicus (Rat).